Reading from the N-terminus, the 55-residue chain is Conotoxin Cal22b (55 aa).

Positions 1-5 (GRPSA) are excised as a propeptide.

In terms of processing, contains 4 disulfide bonds. As to expression, expressed by the venom duct.

Its subcellular location is the secreted. In terms of biological role, probable neurotoxin with unknown target. Possibly targets ion channels. This Californiconus californicus (California cone) protein is Conotoxin Cal22b.